Reading from the N-terminus, the 163-residue chain is Nucleotide-binding protein Tery_2743 (163 aa).

This sequence belongs to the YajQ family.

Nucleotide-binding protein. This Trichodesmium erythraeum (strain IMS101) protein is Nucleotide-binding protein Tery_2743.